A 243-amino-acid chain; its full sequence is DNA repair protein RecO (243 aa).

It belongs to the RecO family.

Functionally, involved in DNA repair and RecF pathway recombination. In Beutenbergia cavernae (strain ATCC BAA-8 / DSM 12333 / CCUG 43141 / JCM 11478 / NBRC 16432 / NCIMB 13614 / HKI 0122), this protein is DNA repair protein RecO.